Consider the following 941-residue polypeptide: MNKKKKPFLGMPAPLGYVPGLGRGATGFTTRSDIGPARDANDPVDDRHAPPGKRTVGDQMKKNQAADDDDEDLNDTNYDEFNGYAGSLFSSGPYEKDDEEADAIYAALDKRMDERRKERREQREKEEIEKYRMERPKIQQQFSDLKRKLAEVTEEEWLSIPEVGDARNKRQRNPRYEKLTPVPDSFFAKHLQTGENHTSVDPRQTQFGGLNTPYPGGLNTPYPGGMTPGLMTPGTGELDMRKIGQARNTLMDMRLSQVSDSVSGQTVVDPKGYLTDLNSMIPTHGGDINDIKKARLLLKSVRETNPHHPPAWIASARLEEVTGKLQVARNLIMKGTEMCPKSEDVWLEAARLQPGDTAKAVVAQAVRHLPQFVRIYIRAAELETDIRAKKRVLRKALEHVPNSVRLWKAAVELEEPEDARIMLSRAVECCPTSVELWLALARLETYENARKVLNKARENIPTDRHIWITAAKLEEANGNTQMVEKIIDRAITSLRANGVEINREQWIQDAEECDRAGSVATCQAVMRAVIGIGIEEEDRKHTWMEDADSCVAHNALECARAIYAYALQVFPSKKSVWLRAAYFGKNHGTRESLEALLQRAVAHCPKAEVLWLMGAKSKWLTGDVPAARSILALAFQANPNSEEIWLAAVKLESENDEYERARRLLAKARSSAPTARVFMKSVKLEWVQDNIRAAQDLCEEALRHYEDFPKLWMMKGQIEEQKEMMEKAREAYNQGLKKCPHSTPLWLLLSRLEEKIGQLTRTRAILEKSRLKNPKNPGLWLESVRLEYRAGLKNIANTLMAKALQECPNSGILWSEAIFLEARPQRRTKSVDALKKCEHDPHVLLAVAKLFWSQRKITKAREWFHRTVKIDSDLGDAWAFFYKFELQHGTEERQEEVRKRCESAEPRHGELWCAVSEDIANWQKKIGDILRLVAGRIKNTF.

Residues 1–79 (MNKKKKPFLG…DEDLNDTNYD (79 aa)) form a disordered region. The span at 39–65 (DANDPVDDRHAPPGKRTVGDQMKKNQA) shows a compositional bias: basic and acidic residues. Acidic residues predominate over residues 66 to 78 (ADDDDEDLNDTNY). S143 carries the post-translational modification Phosphoserine. Phosphothreonine occurs at positions 180, 266, and 275. A Phosphoserine modification is found at S279. HAT repeat units lie at residues 384–416 (TDIR…LEEP), 418–444 (DARI…ARLE), 445–476 (TYEN…LEEA), 554–586 (NALE…FGKN), 588–620 (GTRE…SKWL), 622–654 (GDVP…LESE), 689–721 (DNIR…IEEQ), 723–755 (EMME…LEEK), and 855–887 (RKIT…FELQ).

As to quaternary structure, identified in the spliceosome B complex. Identified in the spliceosome C complex. Associates with the U5 snRNP particle. Component of the U4/U6-U5 tri-snRNP complex composed of the U4, U6 and U5 snRNAs and at least PRPF3, PRPF4, PRPF6, PRPF8, PRPF31, SNRNP200, TXNL4A, SNRNP40, DDX23, CD2BP2, PPIH, SNU13, EFTUD2, SART1 and USP39, LSm proteins LSm2-8 and Sm proteins. Interacts with ARAF1. Interacts with AR and NR3C1, but not ESR1, independently of the presence of hormones. Interacts with USH1G. Phosphorylated by PRP4K during spliceosome assembly.

Its subcellular location is the nucleus. It localises to the nucleoplasm. It is found in the nucleus speckle. Its function is as follows. Involved in pre-mRNA splicing as component of the U4/U6-U5 tri-snRNP complex, one of the building blocks of the spliceosome. Enhances dihydrotestosterone-induced transactivation activity of AR, as well as dexamethasone-induced transactivation activity of NR3C1, but does not affect estrogen-induced transactivation. The protein is Pre-mRNA-processing factor 6 (PRPF6) of Pongo abelii (Sumatran orangutan).